Here is an 868-residue protein sequence, read N- to C-terminus: Probable beta-glucosidase F (868 aa).

The N-terminal stretch at 1–20 (MAHRWLILALVAAAAPRALA) is a signal peptide. The interval 21 to 40 (SPGPSLNERQSDDEPFSPPY) is disordered. N-linked (GlcNAc...) asparagine glycans are attached at residues Asn65, Asn73, and Asn257. Asp285 is an active-site residue. N-linked (GlcNAc...) asparagine glycosylation is found at Asn328, Asn360, Asn395, Asn421, and Asn726. The interval 731 to 752 (YPYPDGYSTDPQPPPRAGGAEG) is disordered.

Belongs to the glycosyl hydrolase 3 family.

It is found in the secreted. The catalysed reaction is Hydrolysis of terminal, non-reducing beta-D-glucosyl residues with release of beta-D-glucose.. It functions in the pathway glycan metabolism; cellulose degradation. In terms of biological role, beta-glucosidases are one of a number of cellulolytic enzymes involved in the degradation of cellulosic biomass. Catalyzes the last step releasing glucose from the inhibitory cellobiose. The polypeptide is Probable beta-glucosidase F (bglF) (Emericella nidulans (strain FGSC A4 / ATCC 38163 / CBS 112.46 / NRRL 194 / M139) (Aspergillus nidulans)).